A 98-amino-acid chain; its full sequence is Alpha-elicitin hibernalin (98 aa).

3 disulfide bridges follow: C3/C71, C27/C56, and C51/C95.

It localises to the secreted. In terms of biological role, induces local and distal defense responses (incompatible hypersensitive reaction) in plants from the solanaceae and cruciferae families. Elicits leaf necrosis and causes the accumulation of pathogenesis-related proteins. Might interact with the lipidic molecules of the plasma membrane. The chain is Alpha-elicitin hibernalin from Phytophthora hibernalis.